A 192-amino-acid polypeptide reads, in one-letter code: Imidazoleglycerol-phosphate dehydratase (192 aa).

Belongs to the imidazoleglycerol-phosphate dehydratase family.

It localises to the cytoplasm. The catalysed reaction is D-erythro-1-(imidazol-4-yl)glycerol 3-phosphate = 3-(imidazol-4-yl)-2-oxopropyl phosphate + H2O. It functions in the pathway amino-acid biosynthesis; L-histidine biosynthesis; L-histidine from 5-phospho-alpha-D-ribose 1-diphosphate: step 6/9. The chain is Imidazoleglycerol-phosphate dehydratase from Staphylococcus aureus (strain JH9).